Here is a 790-residue protein sequence, read N- to C-terminus: Lon protease 2 (790 aa).

Residues 18 to 210 enclose the Lon N-terminal domain; the sequence is LRILPLRNMV…HVTFYMTRQL (193 aa). 362 to 369 contacts ATP; sequence GPPGVGKT. One can recognise a Lon proteolytic domain in the interval 598–779; the sequence is SWGCGIATGL…SDVLQLALLP (182 aa). Residues Ser685 and Lys728 contribute to the active site.

Belongs to the peptidase S16 family. In terms of assembly, homohexamer. Organized in a ring with a central cavity.

The protein localises to the cytoplasm. The catalysed reaction is Hydrolysis of proteins in presence of ATP.. ATP-dependent serine protease that mediates the selective degradation of mutant and abnormal proteins as well as certain short-lived regulatory proteins. Required for cellular homeostasis and for survival from DNA damage and developmental changes induced by stress. Degrades polypeptides processively to yield small peptide fragments that are 5 to 10 amino acids long. Binds to DNA in a double-stranded, site-specific manner. The polypeptide is Lon protease 2 (Syntrophobacter fumaroxidans (strain DSM 10017 / MPOB)).